The chain runs to 723 residues: Hypoxia-inducible factor prolyl hydroxylase (723 aa).

8 residues coordinate Zn(2+): Cys39, Cys42, Cys54, Cys57, Cys63, His67, His75, and Cys79. The MYND-type; atypical zinc finger occupies Cys39–Cys79. Positions Pro249 to Ser270 are enriched in low complexity. Disordered regions lie at residues Pro249–Thr275 and Ile294–Tyr323. The region spanning Gly468–Asp566 is the Fe2OG dioxygenase domain. Fe cation-binding residues include His487, Asp489, and His548. A 2-oxoglutarate-binding site is contributed by Arg557. A disordered region spans residues Arg678–Ile723. Positions Asp687–Ser699 are enriched in basic and acidic residues.

Interacts (via catalytic domain) with lin-10 (via N-terminus); the interaction regulates lin-10 subcellular localization; the interaction is direct. Interacts (via catalytic domain) with swan-1 (via WD 1-3 repeats); the interaction may regulate vhl-1-independent hif-1 transcriptional activity; the interaction is direct. Interacts (via C-terminus) with cysl-1; the interaction is enhanced by hydrogen disulfide and activates hif-1-mediated transcription; the interaction is direct. Fe(2+) serves as cofactor. Requires L-ascorbate as cofactor. In larvae and adults, expressed in pharyngeal and body wall muscles.

Its subcellular location is the cytoplasm. It localises to the nucleus. The protein resides in the cell projection. The protein localises to the dendrite. It is found in the axon. It carries out the reaction L-prolyl-[hypoxia-inducible factor alpha subunit] + 2-oxoglutarate + O2 = trans-4-hydroxy-L-prolyl-[hypoxia-inducible factor alpha subunit] + succinate + CO2. Its activity is regulated as follows. Inhibited by Co(2+) and dimethyloxalylglycine. Inhibited by the iron chelator 2, 2'-dipyridyl. In terms of biological role, cellular oxygen sensor which regulates the stability and the activity of hypoxia-inducible transcription factor, hif-1. In normoxic conditions, hydroxylates hif-1 targeting it for vhl-1-mediated proteasomal degradation. In addition, regulates hif-1 transcriptional activity in a vhl-1-independent manner and independently of its hydroxylase activity. By regulating hif-1 activity, controls several cellular responses. Mediates susceptibility to B.thuringiensis and V.cholerae pore-forming toxins and enteropathogenic E.coli. Mediates susceptibility to P.aeruginosa PAO1-mediated killing by regulating resistance to cyanide produced by P.aeruginosa. Mediates resistance to S.aureus-mediated killing. In addition, plays a role in heat acclimation, neuronal development, behavioral responses to reoxygenation and hydrogen sulfide, iron homeostasis and aging. In neurons, involved in mitochondrion fusion during reoxygenation. Involved in egg laying. Functionally, regulates the trafficking of the glutamate receptor glr-1, probably independently of hif-1, by regulating lin-10 subcellular localization in response to oxygen levels. May hydroxylate lin-10. In Caenorhabditis elegans, this protein is Hypoxia-inducible factor prolyl hydroxylase.